The sequence spans 1042 residues: Isoleucine--tRNA ligase (1042 aa).

Positions 48 to 58 (PFATGLPHFGH) match the 'HIGH' region motif. The 'KMSKS' region signature appears at 594 to 598 (KMSKS). Lysine 597 is an ATP binding site.

It belongs to the class-I aminoacyl-tRNA synthetase family. IleS type 2 subfamily. As to quaternary structure, monomer. Requires Zn(2+) as cofactor.

It localises to the cytoplasm. It catalyses the reaction tRNA(Ile) + L-isoleucine + ATP = L-isoleucyl-tRNA(Ile) + AMP + diphosphate. Catalyzes the attachment of isoleucine to tRNA(Ile). As IleRS can inadvertently accommodate and process structurally similar amino acids such as valine, to avoid such errors it has two additional distinct tRNA(Ile)-dependent editing activities. One activity is designated as 'pretransfer' editing and involves the hydrolysis of activated Val-AMP. The other activity is designated 'posttransfer' editing and involves deacylation of mischarged Val-tRNA(Ile). The chain is Isoleucine--tRNA ligase from Borreliella burgdorferi (strain ZS7) (Borrelia burgdorferi).